The sequence spans 366 residues: tRNA/tmRNA (uracil-C(5))-methyltransferase (366 aa).

S-adenosyl-L-methionine-binding residues include Q190, Y218, N223, E239, and D299. C324 acts as the Nucleophile in catalysis. The active-site Proton acceptor is the E358.

It belongs to the class I-like SAM-binding methyltransferase superfamily. RNA M5U methyltransferase family. TrmA subfamily.

The enzyme catalyses uridine(54) in tRNA + S-adenosyl-L-methionine = 5-methyluridine(54) in tRNA + S-adenosyl-L-homocysteine + H(+). It carries out the reaction uridine(341) in tmRNA + S-adenosyl-L-methionine = 5-methyluridine(341) in tmRNA + S-adenosyl-L-homocysteine + H(+). Dual-specificity methyltransferase that catalyzes the formation of 5-methyluridine at position 54 (m5U54) in all tRNAs, and that of position 341 (m5U341) in tmRNA (transfer-mRNA). This Cronobacter sakazakii (strain ATCC BAA-894) (Enterobacter sakazakii) protein is tRNA/tmRNA (uracil-C(5))-methyltransferase.